We begin with the raw amino-acid sequence, 95 residues long: Integration host factor subunit beta (95 aa).

The segment at 56 to 76 (RAPRTGRNPKTGTSVELDGKY) is disordered.

It belongs to the bacterial histone-like protein family. In terms of assembly, heterodimer of an alpha and a beta chain.

In terms of biological role, this protein is one of the two subunits of integration host factor, a specific DNA-binding protein that functions in genetic recombination as well as in transcriptional and translational control. This chain is Integration host factor subunit beta, found in Shewanella denitrificans (strain OS217 / ATCC BAA-1090 / DSM 15013).